The chain runs to 674 residues: DNA ligase (674 aa).

NAD(+) is bound by residues 34-38 (DFEFD), 83-84 (SL), and Glu-117. Catalysis depends on Lys-119, which acts as the N6-AMP-lysine intermediate. Arg-140, Glu-184, Lys-297, and Lys-321 together coordinate NAD(+). 4 residues coordinate Zn(2+): Cys-415, Cys-418, Cys-433, and Cys-439. A BRCT domain is found at 598–674 (LVNNNFEGQS…IDEDEFERML (77 aa)).

Belongs to the NAD-dependent DNA ligase family. LigA subfamily. Mg(2+) serves as cofactor. Mn(2+) is required as a cofactor.

It carries out the reaction NAD(+) + (deoxyribonucleotide)n-3'-hydroxyl + 5'-phospho-(deoxyribonucleotide)m = (deoxyribonucleotide)n+m + AMP + beta-nicotinamide D-nucleotide.. DNA ligase that catalyzes the formation of phosphodiester linkages between 5'-phosphoryl and 3'-hydroxyl groups in double-stranded DNA using NAD as a coenzyme and as the energy source for the reaction. It is essential for DNA replication and repair of damaged DNA. This chain is DNA ligase, found in Chlorobaculum tepidum (strain ATCC 49652 / DSM 12025 / NBRC 103806 / TLS) (Chlorobium tepidum).